The primary structure comprises 619 residues: Chaperone protein HscA homolog (619 aa).

It belongs to the heat shock protein 70 family.

Its function is as follows. Chaperone involved in the maturation of iron-sulfur cluster-containing proteins. Has a low intrinsic ATPase activity which is markedly stimulated by HscB. This Laribacter hongkongensis (strain HLHK9) protein is Chaperone protein HscA homolog.